Here is a 231-residue protein sequence, read N- to C-terminus: GFP-like fluorescent chromoprotein FP538 (231 aa).

Phe65 bears the Phenylalanine amide; atypical mark. Positions 66–68 (KYG) form a cross-link, 2-tetrahydro-2-pyridyl-5-imidazolinone (Lys-Gly). 2,3-didehydrotyrosine is present on Tyr67.

This sequence belongs to the GFP family. Homotetramer. Post-translationally, contains a chromophore consisting of modified amino acid residues. The chromophore is formed by autocatalytic backbone condensation between Xaa-N and Gly-(N+2), and oxidation of Tyr-(N+1) to didehydrotyrosine. In addition, the residue N lysine undergoes cyclization. The alpha-amino nitrogen is replaced by the epsilon-amino nitrogen, the peptide chain is broken, residue N-1 is released as an amide, and a double bond is formed between the alpha-carbon and the nitrogen so that a tetrahydropyridine ring results. Maturation of the chromophore requires nothing other than molecular oxygen. As to expression, tentacle and oral disk.

Pigment protein that is yellow in color. The polypeptide is GFP-like fluorescent chromoprotein FP538 (Zoanthus sp. (Green polyp)).